Reading from the N-terminus, the 701-residue chain is Transcriptional regulator Kaiso (701 aa).

The region spanning 32-94 (CDVTVIVEDR…IYSSKIVRVR (63 aa)) is the BTB domain. Disordered stretches follow at residues 128-158 (GAGG…SPLP) and 181-311 (SSDD…QNQH). Over residues 245 to 258 (TPSSQVQLTQNSLP) the composition is skewed to polar residues. A compositionally biased stretch (low complexity) spans 259–273 (TNQQSSKNTSSTTQK). Over residues 278 to 311 (VNANISKNPTPAANGFLSPTAQKQGTPNAVQNQH) the composition is skewed to polar residues. The required for methylation dependent DNA-binding stretch occupies residues 470-609 (AKLDLDGLPN…QIRQYAYVNN (140 aa)). 3 consecutive C2H2-type zinc fingers follow at residues 501 to 523 (YICI…FNVH), 529 to 551 (YPCR…EIHH), and 557 to 580 (YQCL…RSVH). Residues 519 to 701 (HFNVHSWEKK…EFEFVIPESY (183 aa)) form a required for sequence specific DNA-binding region. Residues 644 to 664 (DIDPDEPQQPASEGNHANSAT) form a disordered region. Polar residues predominate over residues 652–664 (QPASEGNHANSAT).

In terms of assembly, self associates. Interacts with tcf7l1-A, leading to repression of tcf7l1-A target genes. Interacts with ctnnd1, and this interaction may inhibit DNA-binding. Interacts with ncor1.

The protein localises to the nucleus. Functionally, transcriptional regulator with bimodal DNA-binding specificity. Binds to methylated CpG dinucleotides in the consensus sequence 5'-CGCG-3' and also binds to the non-methylated consensus sequence 5'-CTGCNA-3'. May recruit the N-CoR repressor complex to promote histone deacetylation and the formation of repressive chromatin structures in target gene promoters. Contributes to the repression of target genes of the Wnt signaling pathway and to the methylation-dependent repression of zygotic transcription prior to the mid-blastula transition (MBT). Also required for gastrulation movements. This is Transcriptional regulator Kaiso (zbtb33) from Xenopus laevis (African clawed frog).